The primary structure comprises 572 residues: 2-succinyl-5-enolpyruvyl-6-hydroxy-3-cyclohexene-1-carboxylate synthase (572 aa).

The protein belongs to the TPP enzyme family. MenD subfamily. Homodimer. Requires Mg(2+) as cofactor. Mn(2+) serves as cofactor. The cofactor is thiamine diphosphate.

It catalyses the reaction isochorismate + 2-oxoglutarate + H(+) = 5-enolpyruvoyl-6-hydroxy-2-succinyl-cyclohex-3-ene-1-carboxylate + CO2. The protein operates within quinol/quinone metabolism; 1,4-dihydroxy-2-naphthoate biosynthesis; 1,4-dihydroxy-2-naphthoate from chorismate: step 2/7. Its pathway is quinol/quinone metabolism; menaquinone biosynthesis. Functionally, catalyzes the thiamine diphosphate-dependent decarboxylation of 2-oxoglutarate and the subsequent addition of the resulting succinic semialdehyde-thiamine pyrophosphate anion to isochorismate to yield 2-succinyl-5-enolpyruvyl-6-hydroxy-3-cyclohexene-1-carboxylate (SEPHCHC). In Aeromonas salmonicida (strain A449), this protein is 2-succinyl-5-enolpyruvyl-6-hydroxy-3-cyclohexene-1-carboxylate synthase.